The following is a 322-amino-acid chain: DNA repair and recombination protein RadA (322 aa).

Residue 105–112 (GMYGSGKT) coordinates ATP.

It belongs to the eukaryotic RecA-like protein family.

Functionally, involved in DNA repair and in homologous recombination. Binds and assemble on single-stranded DNA to form a nucleoprotein filament. Hydrolyzes ATP in a ssDNA-dependent manner and promotes DNA strand exchange between homologous DNA molecules. This is DNA repair and recombination protein RadA from Methanococcus maripaludis (strain C6 / ATCC BAA-1332).